The following is a 417-amino-acid chain: mRNA cap guanine-N(7) methyltransferase (417 aa).

The mRNA cap 0 methyltransferase domain occupies 129–412 (SPIIKLRNFN…LYTVFAFKKV (284 aa)). 138–139 (NN) lines the mRNA pocket. 6 residues coordinate S-adenosyl-L-methionine: Lys-142, Gly-160, Asp-182, Asp-211, Gln-237, and Tyr-242.

It belongs to the class I-like SAM-binding methyltransferase superfamily. mRNA cap 0 methyltransferase family.

The protein localises to the nucleus. The catalysed reaction is a 5'-end (5'-triphosphoguanosine)-ribonucleoside in mRNA + S-adenosyl-L-methionine = a 5'-end (N(7)-methyl 5'-triphosphoguanosine)-ribonucleoside in mRNA + S-adenosyl-L-homocysteine. Its function is as follows. Responsible for methylating the 5'-cap structure of mRNAs. This is mRNA cap guanine-N(7) methyltransferase (ABD1) from Candida glabrata (strain ATCC 2001 / BCRC 20586 / JCM 3761 / NBRC 0622 / NRRL Y-65 / CBS 138) (Yeast).